The sequence spans 215 residues: Ectodysplasin-A receptor-associated adapter protein (215 aa).

Disordered stretches follow at residues 1-41 (MGLR…FNMS) and 62-86 (LNCP…TGDP). Over residues 17–28 (GHQEDHMVKEPV) the composition is skewed to basic and acidic residues. The region spanning 123–202 (DVIRIKLDPC…KVLRRWVDEE (80 aa)) is the Death domain.

In terms of assembly, self-associates and binds EDAR, TRAF1, TRAF2 and TRAF3. In terms of tissue distribution, detected in adult pancreas, placenta and fetal skin, and at lower levels in lung, thymus, prostate and testis.

Its subcellular location is the cytoplasm. Functionally, adapter protein that interacts with EDAR DEATH domain and couples the receptor to EDA signaling pathway during morphogenesis of ectodermal organs. Mediates the activation of NF-kappa-B. The chain is Ectodysplasin-A receptor-associated adapter protein (EDARADD) from Homo sapiens (Human).